The sequence spans 215 residues: Peroxiredoxin (215 aa).

The 156-residue stretch at 3–158 folds into the Thioredoxin domain; that stretch reads PLLGDNFPEI…ILRAVKALQV (156 aa). Cysteine 45 functions as the Cysteine sulfenic acid (-SOH) intermediate in the catalytic mechanism. Residue arginine 121 participates in substrate binding. Cysteines 205 and 211 form a disulfide.

It belongs to the peroxiredoxin family. Prx6 subfamily. As to quaternary structure, homodecamer. Pentamer of dimers that assemble into a ring structure.

The protein localises to the cytoplasm. The catalysed reaction is a hydroperoxide + [thioredoxin]-dithiol = an alcohol + [thioredoxin]-disulfide + H2O. Its function is as follows. Thiol-specific peroxidase that catalyzes the reduction of hydrogen peroxide and organic hydroperoxides to water and alcohols, respectively. Plays a role in cell protection against oxidative stress by detoxifying peroxides. In Archaeoglobus fulgidus (strain ATCC 49558 / DSM 4304 / JCM 9628 / NBRC 100126 / VC-16), this protein is Peroxiredoxin.